A 284-amino-acid polypeptide reads, in one-letter code: 3-methyl-2-oxobutanoate hydroxymethyltransferase (284 aa).

The Mg(2+) site is built by Asp-52 and Asp-91. Residues 52–53 (DS), Asp-91, and Lys-121 each bind 3-methyl-2-oxobutanoate. Mg(2+) is bound at residue Glu-123. The active-site Proton acceptor is Glu-191.

The protein belongs to the PanB family. As to quaternary structure, homodecamer; pentamer of dimers. The cofactor is Mg(2+).

It is found in the cytoplasm. The enzyme catalyses 3-methyl-2-oxobutanoate + (6R)-5,10-methylene-5,6,7,8-tetrahydrofolate + H2O = 2-dehydropantoate + (6S)-5,6,7,8-tetrahydrofolate. The protein operates within cofactor biosynthesis; (R)-pantothenate biosynthesis; (R)-pantoate from 3-methyl-2-oxobutanoate: step 1/2. In terms of biological role, catalyzes the reversible reaction in which hydroxymethyl group from 5,10-methylenetetrahydrofolate is transferred onto alpha-ketoisovalerate to form ketopantoate. This is 3-methyl-2-oxobutanoate hydroxymethyltransferase from Deinococcus radiodurans (strain ATCC 13939 / DSM 20539 / JCM 16871 / CCUG 27074 / LMG 4051 / NBRC 15346 / NCIMB 9279 / VKM B-1422 / R1).